We begin with the raw amino-acid sequence, 477 residues long: Protein DETOXIFICATION 5 (477 aa).

12 helical membrane passes run 38–58 (AAPM…SVMV), 72–92 (LATA…VGAL), 113–133 (FSAI…WFYM), 146–166 (ISKV…AQAV), 187–207 (AITT…AFGL), 211–231 (GAAL…ALYV), 263–283 (AAMT…SGLL), 292–312 (VLSI…GIGA), 333–353 (AVFA…TLLF), 376–396 (LSSL…LDGV), 411–431 (VVAY…WGHM), and 436–456 (LWIG…IVTA).

Belongs to the multi antimicrobial extrusion (MATE) (TC 2.A.66.1) family.

It is found in the membrane. This is Protein DETOXIFICATION 5 from Arabidopsis thaliana (Mouse-ear cress).